Consider the following 762-residue polypeptide: cGMP-dependent protein kinase 2 (762 aa).

Residues 1-26 form a disordered region; it reads MGNGSVKPKHAKHPDGHSGNLSNEAL. A lipid anchor (N-myristoyl glycine) is attached at Gly2. Phosphoserine occurs at positions 110 and 117. The tract at residues 118–138 is disordered; the sequence is RRGAKAGVSAEPTTRTYDLNK. The interval 168–283 is cGMP-binding, high affinity; cAMP-binding, moderate affinity; it reads FLKRLDPQQI…DEEYRNFLRS (116 aa). Residues 232–235, 242–243, Lys347, 356–359, 366–367, Asp412, and Arg415 each bind 3',5'-cyclic GMP; these read GELA, RT, GEKA, and RS. Positions 286-416 are cGMP-binding, high affinity; cAMP-binding, low affinity; it reads LLKNLPEDKL…TLNRDDEKRH (131 aa). Residue Ser431 is modified to Phosphoserine. The region spanning 453 to 711 is the Protein kinase domain; sequence LEIIATLGVG…INDIKKHRWL (259 aa). ATP-binding positions include 459–467 and Lys482; that span reads LGVGGFGRV. The active-site Proton acceptor is Asp576. The residue at position 609 (Thr609) is a Phosphothreonine. Residues 712–762 enclose the AGC-kinase C-terminal domain; it reads NGFNWEGLKARSLPSPLRRELSGPIDHSYFDKYPPEKGVPPDEMSGWDKDF. Residues 740-762 are disordered; that stretch reads YFDKYPPEKGVPPDEMSGWDKDF.

The protein belongs to the protein kinase superfamily. AGC Ser/Thr protein kinase family. cGMP subfamily. In terms of assembly, interacts with GRIA1/GLUR1. Post-translationally, myristoylation mediates membrane localization.

Its subcellular location is the apical cell membrane. The protein localises to the cell membrane. It carries out the reaction L-seryl-[protein] + ATP = O-phospho-L-seryl-[protein] + ADP + H(+). The catalysed reaction is L-threonyl-[protein] + ATP = O-phospho-L-threonyl-[protein] + ADP + H(+). With respect to regulation, binding of cGMP results in enzyme activation. Its function is as follows. Crucial regulator of intestinal secretion and bone growth. Phosphorylates and activates CFTR on the plasma membrane. Plays a key role in intestinal secretion by regulating cGMP-dependent translocation of CFTR in jejunum. Acts downstream of NMDAR to activate the plasma membrane accumulation of GRIA1/GLUR1 in synapse and increase synaptic plasticity. Phosphorylates GRIA1/GLUR1 at Ser-863. Acts as a regulator of gene expression and activator of the extracellular signal-regulated kinases MAPK3/ERK1 and MAPK1/ERK2 in mechanically stimulated osteoblasts. Under fluid shear stress, mediates ERK activation and subsequent induction of FOS, FOSL1/FRA1, FOSL2/FRA2 and FOSB that play a key role in the osteoblast anabolic response to mechanical stimulation. The chain is cGMP-dependent protein kinase 2 (Prkg2) from Mus musculus (Mouse).